The sequence spans 234 residues: Conidial surface nicotinamide adenine dinucleotide glycohydrolase nadA (234 aa).

Residues 1-20 form the signal peptide; it reads MIFTNAILVISALLPATVLS. The thump stretch occupies residues 21–117; sequence LQHTEDSLFP…LDTEEQPILG (97 aa). Cystine bridges form between Cys33-Cys80 and Cys38-Cys50. N-linked (GlcNAc...) asparagine glycans are attached at residues Asn45, Asn95, and Asn118. Positions 120–212 constitute a TNT domain; the sequence is TLPVGMKLDR…GLIDDGYLRR (93 aa). Arg129 is a catalytic residue. Residues Phe130, Thr136, and Arg148 each coordinate NAD(+). Gln194 is a catalytic residue. Ca(2+) is bound by residues Ser216, Asp219, Glu220, and Glu223.

Belongs to the fungal surface NADase family. In terms of assembly, homodimer. Post-translationally, N-glycosylated.

The protein resides in the secreted. It catalyses the reaction NAD(+) + H2O = ADP-D-ribose + nicotinamide + H(+). The enzyme catalyses NADP(+) + H2O = ADP-D-ribose 2'-phosphate + nicotinamide + H(+). The catalytic activity is positively regulated by calcium via its binding to the calcium-binding site. Functionally, conidial surface nicotinamide adenine dinucleotide glycohydrolase that cleave NAD(+) and NADP(+) but not their reduced counterparts, NADH and NADPH. Lacks both ADP-ribosyl cyclase and base exchange activity and does not mediate synthesis of calcium messengers cADPR or NAADP. Plays a role in pathogenicity by depleting the host's NAD(+) pool. In Aspergillus fumigatus (strain ATCC MYA-4609 / CBS 101355 / FGSC A1100 / Af293) (Neosartorya fumigata), this protein is Conidial surface nicotinamide adenine dinucleotide glycohydrolase nadA.